Consider the following 482-residue polypeptide: ATP synthase subunit beta, chloroplastic (482 aa).

ATP is bound at residue 162–169; the sequence is GGAGVGKT.

Belongs to the ATPase alpha/beta chains family. In terms of assembly, F-type ATPases have 2 components, CF(1) - the catalytic core - and CF(0) - the membrane proton channel. CF(1) has five subunits: alpha(3), beta(3), gamma(1), delta(1), epsilon(1). CF(0) has four main subunits: a(1), b(1), b'(1) and c(9-12).

The protein resides in the plastid. It localises to the chloroplast thylakoid membrane. The catalysed reaction is ATP + H2O + 4 H(+)(in) = ADP + phosphate + 5 H(+)(out). Its function is as follows. Produces ATP from ADP in the presence of a proton gradient across the membrane. The catalytic sites are hosted primarily by the beta subunits. This chain is ATP synthase subunit beta, chloroplastic, found in Pleurastrum terricola (Filamentous green alga).